Consider the following 240-residue polypeptide: Histidinol dehydrogenase homolog oryD (240 aa).

Gln-64 and His-67 together coordinate Zn(2+). Glu-134 serves as the catalytic Proton acceptor. The Zn(2+) site is built by Asp-168 and His-228.

Belongs to the histidinol dehydrogenase family. Zn(2+) is required as a cofactor.

It functions in the pathway secondary metabolite biosynthesis. In terms of biological role, histidinol dehydrogenase homolog; part of the gene cluster that mediates the biosynthesis of oryzines, natural products with an unusual maleidride backbone. The two subunits of the fungal fatty acid synthase oryfasA and oryfasB probably form octenoic acid. This fatty acid is most likely activated by the acyl-CoA ligase oryP to give octenyl-CoA before the citrate synthase-like protein oryE catalyzes condensation with oxaloacetate to form tricarboxylic acid. The next steps of the pathways are conjectural, but a favorite possible route has been proposed, beginning with decarboxylation and concomitant dehydration by the decarboxylase oryM, followed by tautomerization, which may lead to the production of a diene intermediate. Reduction of this diene intermediate could give the known metabolite piliformic acid. On the pathway to oryzine B and oryzine A, however, hydroxylation of the diene by the alpha-ketoglutarate-dependent dioxygenase oryG and lactonisation by the lactonohydrolases oryH or oryL could give oryzine B directly. Finally, enoyl reduction by the dehydrogenase oryD would then convert oryzine B into oryzine A. The chain is Histidinol dehydrogenase homolog oryD from Aspergillus oryzae (strain ATCC 42149 / RIB 40) (Yellow koji mold).